Reading from the N-terminus, the 543-residue chain is Periplasmic oligopeptide-binding protein OppA (543 aa).

An N-terminal signal peptide occupies residues 1–26 (MSNITKKSLIAAGILTALIAASAATA). Cys-297 and Cys-443 are disulfide-bonded.

It belongs to the bacterial solute-binding protein 5 family. In terms of assembly, the complex is composed of two ATP-binding proteins (OppD and OppF), two transmembrane proteins (OppB and OppC) and a solute-binding protein (OppA).

Its subcellular location is the periplasm. Part of the ABC transporter complex OppABCDF involved in the uptake of oligopeptides, including the cell wall murein tripeptide L-alanyl-gamma-D-glutamyl-meso-diaminopimelate. Plays an important nutritional role and is involved in the recycling of cell wall peptides. Binds peptides containing from two to five amino acid residues regardless of their sequence. Also binds cell wall peptides, such as L-alanyl-gamma-D-glutamyl-meso-diaminopimelate. The polypeptide is Periplasmic oligopeptide-binding protein OppA (Salmonella typhimurium (strain LT2 / SGSC1412 / ATCC 700720)).